Here is a 151-residue protein sequence, read N- to C-terminus: tRNA-specific adenosine deaminase (151 aa).

The region spanning 1–111 (MGKEYFLKVA…LDKKHGGVVS (111 aa)) is the CMP/dCMP-type deaminase domain. Residue histidine 52 participates in Zn(2+) binding. Residue glutamate 54 is the Proton donor of the active site. Residues cysteine 82 and cysteine 85 each contribute to the Zn(2+) site.

This sequence belongs to the cytidine and deoxycytidylate deaminase family. In terms of assembly, homodimer. Zn(2+) serves as cofactor.

The enzyme catalyses adenosine(34) in tRNA + H2O + H(+) = inosine(34) in tRNA + NH4(+). Catalyzes the deamination of adenosine to inosine at the wobble position 34 of tRNA(Arg2). The chain is tRNA-specific adenosine deaminase from Aquifex aeolicus (strain VF5).